An 898-amino-acid polypeptide reads, in one-letter code: Interleukin enhancer-binding factor 3-B (898 aa).

The DZF domain maps to 5-379 (RIFLNDDRHV…ALKRPIEEDG (375 aa)). Disordered stretches follow at residues 52–87 (QEKDSGIEQENPEPEETETTEEGKDSEAKTGENPTR), 374–403 (PIEEDGEDKSPSKKKKKIQKKDEKSEPPQA), 468–529 (LPTG…VMEL), 627–651 (PPPQVMRGRGRGGMNRGRGRGRGGF), and 711–799 (GEGY…QGAA). A compositionally biased stretch (acidic residues) spans 61–71 (ENPEPEETETT). 2 stretches are compositionally biased toward basic and acidic residues: residues 72–81 (EEGKDSEAKT) and 374–384 (PIEEDGEDKSP). The short motif at 372–390 (KRPIEEDGEDKSPSKKKKK) is the Bipartite nuclear localization signal element. In terms of domain architecture, DRBM 1 spans 399–468 (EPPQAMNALM…AVKVLQDMGL (70 aa)). A compositionally biased stretch (acidic residues) spans 474–483 (EKEESVDESE). A compositionally biased stretch (polar residues) spans 489 to 513 (QTPSQTADSEQADSSAGDQSESGKQ). A DRBM 2 domain is found at 521-587 (HGKNPVMELN…ALSALEKLFP (67 aa)). The segment covering 637 to 651 (RGGMNRGRGRGRGGF) has biased composition (gly residues). Residues 717–747 (PTPPKPFVKKPPPPQQQQQPPPQHASNPPKP) show a composition bias toward pro residues. Low complexity predominate over residues 749 to 782 (YNQGYQGHQGGQQQQQPQQQQQQTYNQNQYSNYG).

A component of a ybx2/frgy2-containing mRNA-ribonucleoprotein (mRNP) complex. Also a component of the CCAAT box transcription factor (CBTF) complex. In terms of processing, phosphorylated. Phosphorylation affects nuclear translocation. Methylated by protein arginine N-methyltransferase 1 (prmt1b) in the RGG-rich domain. Methylation decreases DNA-binding and thereby decreases transcription of the gata2 gene, but does not regulate dsRNA binding or subcellular localization.

The protein localises to the nucleus. It localises to the cytoplasm. Its function is as follows. RNA-binding protein that plays an essential role in the biogenesis of circular RNAs (circRNAs) which are produced by back-splicing circularization of pre-mRNAs. Within the nucleus, promotes circRNAs processing by stabilizing the regulatory elements residing in the flanking introns of the circularized exons. Plays thereby a role in the back-splicing of a subset of circRNAs. As a consequence, participates in a wide range of transcriptional and post-transcriptional processes. Binds to poly-U elements and AU-rich elements (AREs) in the 3'-UTR of target mRNAs. Upon viral infection, ILF3 accumulates in the cytoplasm and participates in the innate antiviral response. Mechanistically, ILF3 becomes phosphorylated and activated by the double-stranded RNA-activated protein kinase/PKR which releases ILF3 from cellular mature circRNAs. In turn, unbound ILF3 molecules are able to interact with and thus inhibit viral mRNAs. Has a cytoplasmic role early in development as part of a ribonucleoprotein (mRNP) complex which may regulate mRNA transport and/or translation. Following nuclear localization at the mid-blastula transition, acts as a transcription factor and binds the 5'-CCAAT-3' promoter sequence to regulate transcription of the gata2 gene as a subunit of the CCAAT box transcription factor (CBTF). Its role as an mRNP component negatively regulates its activity as a transcription factor by precluding its nuclear localization. This is Interleukin enhancer-binding factor 3-B (ilf3-b) from Xenopus laevis (African clawed frog).